The sequence spans 722 residues: Glycine--tRNA ligase beta subunit (722 aa).

Belongs to the class-II aminoacyl-tRNA synthetase family. In terms of assembly, tetramer of two alpha and two beta subunits.

The protein localises to the cytoplasm. It carries out the reaction tRNA(Gly) + glycine + ATP = glycyl-tRNA(Gly) + AMP + diphosphate. The sequence is that of Glycine--tRNA ligase beta subunit (glyS) from Xylella fastidiosa (strain 9a5c).